Consider the following 153-residue polypeptide: SsrA-binding protein (153 aa).

Belongs to the SmpB family.

It localises to the cytoplasm. Required for rescue of stalled ribosomes mediated by trans-translation. Binds to transfer-messenger RNA (tmRNA), required for stable association of tmRNA with ribosomes. tmRNA and SmpB together mimic tRNA shape, replacing the anticodon stem-loop with SmpB. tmRNA is encoded by the ssrA gene; the 2 termini fold to resemble tRNA(Ala) and it encodes a 'tag peptide', a short internal open reading frame. During trans-translation Ala-aminoacylated tmRNA acts like a tRNA, entering the A-site of stalled ribosomes, displacing the stalled mRNA. The ribosome then switches to translate the ORF on the tmRNA; the nascent peptide is terminated with the 'tag peptide' encoded by the tmRNA and targeted for degradation. The ribosome is freed to recommence translation, which seems to be the essential function of trans-translation. This is SsrA-binding protein from Orientia tsutsugamushi (strain Boryong) (Rickettsia tsutsugamushi).